The following is a 122-amino-acid chain: Acidic phospholipase A2 Tpu-E6b (122 aa).

7 disulfides stabilise this stretch: Cys26/Cys115, Cys28/Cys44, Cys43/Cys95, Cys49/Cys122, Cys50/Cys88, Cys57/Cys81, and Cys75/Cys86. Residues Tyr27, Gly29, and Gly31 each contribute to the Ca(2+) site. His47 is a catalytic residue. Residue Asp48 participates in Ca(2+) binding. Asp89 is an active-site residue.

As to quaternary structure, monomer. Ca(2+) is required as a cofactor. In terms of tissue distribution, expressed by the venom gland.

Its subcellular location is the secreted. It carries out the reaction a 1,2-diacyl-sn-glycero-3-phosphocholine + H2O = a 1-acyl-sn-glycero-3-phosphocholine + a fatty acid + H(+). Functionally, snake venom phospholipase A2 (PLA2) that weakly inhibits ADP-induced platelet aggregation when tested on platelet rich plasma from human and rabbit blood (15-25% of inhibition at 5-10 ug of enzyme). Exhibits moderate hydrolytic activities toward L-dipalmitoyl phosphatidylcholine. PLA2 catalyzes the calcium-dependent hydrolysis of the 2-acyl groups in 3-sn-phosphoglycerides. This chain is Acidic phospholipase A2 Tpu-E6b, found in Craspedocephalus puniceus (Flat-nosed pitviper).